Consider the following 798-residue polypeptide: Integrin beta-1-A (798 aa).

An N-terminal signal peptide occupies residues 1–21; the sequence is MAHYPVFTVGLLTCLVLCINA. The Extracellular portion of the chain corresponds to 22–727; that stretch reads QQGGTECLKA…VKEPECPSGP (706 aa). The PSI domain maps to 27-77; sequence ECLKANAKSCGECIQAGPNCGWCTKVDFLQEGEPTSARCDDLAALKSKGCP. Disulfide bonds link Cys-28/Cys-46, Cys-36/Cys-464, Cys-39/Cys-65, Cys-49/Cys-76, Cys-206/Cys-212, Cys-260/Cys-300, Cys-400/Cys-414, Cys-434/Cys-462, Cys-466/Cys-486, Cys-477/Cys-489, Cys-491/Cys-500, Cys-502/Cys-533, Cys-516/Cys-531, Cys-525/Cys-536, Cys-538/Cys-553, Cys-555/Cys-576, Cys-560/Cys-574, Cys-568/Cys-579, Cys-581/Cys-590, Cys-592/Cys-615, Cys-599/Cys-613, Cys-607/Cys-618, Cys-620/Cys-630, Cys-633/Cys-636, Cys-640/Cys-691, Cys-646/Cys-665, Cys-649/Cys-661, and Cys-699/Cys-723. Positions 76-106 are disordered; that stretch reads CPEDDIQNPRGRKQKLKDIPITSKGKGERMD. Asn-109 and Asn-131 each carry an N-linked (GlcNAc...) asparagine glycan. The VWFA domain occupies 139 to 377; the sequence is DYPIDLYYLM…QLIIDSYNSL (239 aa). 2 residues coordinate Mg(2+): Ser-151 and Ser-153. Ca(2+) contacts are provided by Ser-153, Asp-156, Asp-157, and Glu-188. N-linked (GlcNAc...) asparagine glycans are attached at residues Asn-211 and Asn-223. Residues Asn-243, Asp-245, Pro-247, and Glu-248 each contribute to the Ca(2+) site. Glu-248 lines the Mg(2+) pocket. N-linked (GlcNAc...) asparagine glycosylation is found at Asn-268 and Asn-362. Asn-416 is a glycosylation site (N-linked (GlcNAc...) asparagine). I-EGF domains lie at 466 to 501, 502 to 554, 555 to 591, and 592 to 631; these read CQDKGTPNSPECHFGNGTFECGACRCNDGRIGKECE, CSTD…KYCE, CDNFNCDRSNGLICGGKGICKCRVCECFPNYSGSACD, and CSEDTSTCMAKNGQICNGRGICDCGRCKCTDPKFQGPTCE. Asn-481 carries an N-linked (GlcNAc...) asparagine glycan. The N-linked (GlcNAc...) asparagine glycan is linked to Asn-520. A glycan (N-linked (GlcNAc...) asparagine) is linked at Asn-584. Asn-669 is a glycosylation site (N-linked (GlcNAc...) asparagine). The helical transmembrane segment at 728-751 threads the bilayer; the sequence is DIIPIVAGVVAGIVLIGLALLLIW. The Cytoplasmic portion of the chain corresponds to 752–798; that stretch reads KLLMIIHDRREFAKFEKEKMNAKWDTGENPIYKSAVTTVVNPKYEGK. A Phosphotyrosine modification is found at Tyr-783.

The protein belongs to the integrin beta chain family. As to quaternary structure, heterodimer of an alpha and a beta subunit.

Its subcellular location is the cell membrane. The protein localises to the cell projection. It is found in the invadopodium membrane. It localises to the ruffle membrane. The protein resides in the melanosome. Its subcellular location is the cleavage furrow. The protein localises to the lamellipodium. It is found in the ruffle. In terms of biological role, beta integrins associate with alpha subunits to form receptor complexes that recognize the sequence R-G-D in a wide array of ligands. May be involved in osteoblast compaction. May play role in myoblast differentiation and fusion during skeletal myogenesis. The chain is Integrin beta-1-A (itgb1-a) from Xenopus laevis (African clawed frog).